Reading from the N-terminus, the 430-residue chain is Serine--tRNA ligase (430 aa).

Residue 237-239 (TAE) coordinates L-serine. Position 268–270 (268–270 (RSE)) interacts with ATP. Glu291 contacts L-serine. 355-358 (EISS) lines the ATP pocket. Ser391 contributes to the L-serine binding site.

It belongs to the class-II aminoacyl-tRNA synthetase family. Type-1 seryl-tRNA synthetase subfamily. As to quaternary structure, homodimer. The tRNA molecule binds across the dimer.

It is found in the cytoplasm. The catalysed reaction is tRNA(Ser) + L-serine + ATP = L-seryl-tRNA(Ser) + AMP + diphosphate + H(+). It carries out the reaction tRNA(Sec) + L-serine + ATP = L-seryl-tRNA(Sec) + AMP + diphosphate + H(+). It participates in aminoacyl-tRNA biosynthesis; selenocysteinyl-tRNA(Sec) biosynthesis; L-seryl-tRNA(Sec) from L-serine and tRNA(Sec): step 1/1. Catalyzes the attachment of serine to tRNA(Ser). Is also able to aminoacylate tRNA(Sec) with serine, to form the misacylated tRNA L-seryl-tRNA(Sec), which will be further converted into selenocysteinyl-tRNA(Sec). In Shigella dysenteriae serotype 1 (strain Sd197), this protein is Serine--tRNA ligase.